The following is a 1901-amino-acid chain: A-kinase anchor protein 11 (1901 aa).

Phosphoserine occurs at positions 18, 422, 433, 444, and 448. The disordered stretch occupies residues 407-443 (ALPANVRKPTPRKPESPYGNLCDAPDSPRPVKASRED). Disordered stretches follow at residues 843-864 (NPGN…SSSK) and 971-993 (LPVS…DSQN). Threonine 981 and threonine 1100 each carry phosphothreonine. The disordered stretch occupies residues 1131–1153 (EFAPATPPSTPHNSSVGSLSENE). Polar residues predominate over residues 1141–1153 (PHNSSVGSLSENE). Phosphoserine is present on residues serine 1171, serine 1176, serine 1177, serine 1242, and serine 1337. Phosphothreonine is present on threonine 1485. Residue serine 1580 is modified to Phosphoserine. The segment at 1650–1663 (LAEKIVAEAIEKAE) is PKA-RII subunit binding domain. Residues 1708-1805 (KEIEDFQSTE…HEDEVEGLGQ (98 aa)) form a disordered region. The segment covering 1713 to 1740 (FQSTESVSSQQMNLSIGDDSTGSWSNLS) has biased composition (polar residues). Over residues 1747–1756 (DESSSFHHLS) the composition is skewed to basic and acidic residues. Residues 1757-1772 (ESNGNSSSWSSLGLEG) are compositionally biased toward low complexity. Acidic residues predominate over residues 1787–1801 (DGPDDKDEEHEDEVE).

This sequence belongs to the AKAP110 family. As to expression, expressed in heart, brain, lung, liver, kidney, testis and ovary. Weakly expressed in skeletal muscle, pancreas and spleen.

The protein localises to the cytoplasm. It localises to the cytoskeleton. It is found in the microtubule organizing center. Its subcellular location is the centrosome. Binds to type II regulatory subunits of protein kinase A and anchors/targets them. The sequence is that of A-kinase anchor protein 11 (AKAP11) from Homo sapiens (Human).